The following is a 1024-amino-acid chain: MDPNRIIQALKGTIDPNLRLAAENELNQSYKIINFAPTLLQIIVSEQVEFPVRQAAAIYLKNMVSQYWQDREPTLGEVVFPFNIHENDRGQIRENMVEAIIRCPESIRAQLTVCLRAIIKHDFPGRWTGVVDKINLYLQSQNSGSWYGSLLALYQLVKNYEFKKAEERDPLLAAMQIFLPRLQQLITQLLSDATFISVLIQKQILKIFHALVQLINNTVMTHWMEILRTVVDRDVPAIWFSECLRGGFQETLEADEDDRPELIWWKCKKWALHILTRIFERYGSPGNVTKEYVEFADFFLKTYALGIQQVLLKVMEQHRQRQYVSPRVLQQTLSFMTQGVSHSLTWRQMKPHMQTITHELVFPLMCYKDEDERLWQEDPYEYIRMKFNVYDDHVSPATAAQTLLCTAARKRKEVLPQMMEFCHQILVDPSADPRRTDGALHVIGTLAQPLLKKRVYRDQMELMLQNYVFPLLNSNLAYLRARSCWVLHSFSPLKFHNELVLRNAVELVKHNLVEDKEMPVKVEAAIALQTLVRNQEQAKVYIRPFIRPVMQELLHIIKETENDDLTGVIQKMICEYSEEVTVIAVDMTQNLAEIFSKILQSEEYEESEDKTVMALGILSTIDTILTVMGDRKEISQQLEGICLQVIGLVLQKPIIGMAEFYEEILSLAFGLTCYCISPQMWQLLGVLYDVFQHDCFDYFTDMMPLLHNYVTVDTNMLLSDPKYLEVIYTMCKKVLTSDAGEDPECHAAKLLEVIILQCRGRGIDQCIPLFVEAVLERLTRGVKSSELRTMCLQVVIAALYYNPTLLIHTLENIRFPHSPEPITAQFINQWMNDTEFFLGLHDRKMCVIGLSILMELPSRPAVLEEVVGQIVPSVLLLFLGLKHIYASRVLNKPEQFGRAQGSEEEENEEIPSDEDEVGEKGVALQPSVAPTGNDNEDDDDEDDDEYWDDEGLEGTPLEEYSTPLDCDNGEDEYQFFTASLLRVQSSDAGWYQSLTSPLNEDQRKQLQEIYNLAQQRRSTGVKGL.

The region spanning 22 to 102 (AENELNQSYK…RENMVEAIIR (81 aa)) is the Importin N-terminal domain. A disordered region spans residues 896 to 969 (FGRAQGSEEE…YSTPLDCDNG (74 aa)). 2 stretches are compositionally biased toward acidic residues: residues 902–917 (SEEEENEEIPSDEDEV) and 934–952 (DNEDDDDEDDDEYWDDEGL).

This sequence belongs to the importin beta family.

The protein resides in the cytoplasm. It is found in the nucleus. Involved in nuclear protein import, either by acting as autonomous nuclear transport receptor or as an adapter-like protein in association with the importin-beta subunit KPNB1. Acting autonomously, may serve as receptor for nuclear localization signals (NLS) and promote translocation of import substrates through the nuclear pore complex (NPC) by an energy requiring, Ran-dependent mechanism. At the nucleoplasmic side of the NPC, Ran binds to importin, the importin/substrate complex dissociates and importin is re-exported from the nucleus to the cytoplasm where GTP hydrolysis releases Ran. The directionality of nuclear import is thought to be conferred by an asymmetric distribution of the GTP- and GDP-bound forms of Ran between the cytoplasm and nucleus. In vitro mediates the nuclear import of the signal recognition particle protein SRP19. May also be involved in cytoplasm-to-nucleus shuttling of a broad spectrum of other cargos, including Argonaute-microRNAs complexes, the JUN protein, RELA/NF-kappa-B p65 subunit, the translation initiation factor EIF4E and a set of receptor-activated mothers against decapentaplegic homolog (SMAD) transcription factors that play a critical role downstream of the large family of transforming growth factor beta and bone morphogenetic protein (BMP) cytokines. This is Importin-8 (ipo8) from Danio rerio (Zebrafish).